We begin with the raw amino-acid sequence, 128 residues long: Large ribosomal subunit protein bL17 (128 aa).

The protein belongs to the bacterial ribosomal protein bL17 family. As to quaternary structure, part of the 50S ribosomal subunit. Contacts protein L32.

This is Large ribosomal subunit protein bL17 from Streptococcus gordonii (strain Challis / ATCC 35105 / BCRC 15272 / CH1 / DL1 / V288).